The following is a 473-amino-acid chain: ATP synthase subunit beta (473 aa).

153–160 serves as a coordination point for ATP; sequence GGAGVGKT.

This sequence belongs to the ATPase alpha/beta chains family. In terms of assembly, F-type ATPases have 2 components, CF(1) - the catalytic core - and CF(0) - the membrane proton channel. CF(1) has five subunits: alpha(3), beta(3), gamma(1), delta(1), epsilon(1). CF(0) has three main subunits: a(1), b(2) and c(9-12). The alpha and beta chains form an alternating ring which encloses part of the gamma chain. CF(1) is attached to CF(0) by a central stalk formed by the gamma and epsilon chains, while a peripheral stalk is formed by the delta and b chains.

The protein resides in the cell inner membrane. It carries out the reaction ATP + H2O + 4 H(+)(in) = ADP + phosphate + 5 H(+)(out). Its function is as follows. Produces ATP from ADP in the presence of a proton gradient across the membrane. The catalytic sites are hosted primarily by the beta subunits. The protein is ATP synthase subunit beta of Rickettsia massiliae (strain Mtu5).